Here is a 215-residue protein sequence, read N- to C-terminus: Probable transaldolase (215 aa).

The active-site Schiff-base intermediate with substrate is K83.

This sequence belongs to the transaldolase family. Type 3B subfamily.

The protein localises to the cytoplasm. The enzyme catalyses D-sedoheptulose 7-phosphate + D-glyceraldehyde 3-phosphate = D-erythrose 4-phosphate + beta-D-fructose 6-phosphate. Its pathway is carbohydrate degradation; pentose phosphate pathway; D-glyceraldehyde 3-phosphate and beta-D-fructose 6-phosphate from D-ribose 5-phosphate and D-xylulose 5-phosphate (non-oxidative stage): step 2/3. Transaldolase is important for the balance of metabolites in the pentose-phosphate pathway. This Methanococcus maripaludis (strain C5 / ATCC BAA-1333) protein is Probable transaldolase.